We begin with the raw amino-acid sequence, 151 residues long: Small ribosomal subunit protein bS6 (151 aa).

Residues 96 to 151 (HEEGQSAMLTRRDDRRERDGDDRPRRREGGFDRGDRGDRGDRGPRRPRDNEAGEGA) are disordered.

This sequence belongs to the bacterial ribosomal protein bS6 family.

Binds together with bS18 to 16S ribosomal RNA. This is Small ribosomal subunit protein bS6 from Brucella anthropi (strain ATCC 49188 / DSM 6882 / CCUG 24695 / JCM 21032 / LMG 3331 / NBRC 15819 / NCTC 12168 / Alc 37) (Ochrobactrum anthropi).